Consider the following 241-residue polypeptide: 3-oxoacyl-[acyl-carrier-protein] reductase FabG (241 aa).

Residues 13-16, Ser38, 57-58, and Asn83 each bind NADP(+); these read GASG and EV. Substrate is bound at residue Ser135. Residue Tyr148 is the Proton acceptor of the active site. NADP(+) is bound by residues 148–152 and Ile181; that span reads YCASK.

It belongs to the short-chain dehydrogenases/reductases (SDR) family. As to quaternary structure, homotetramer.

It carries out the reaction a (3R)-hydroxyacyl-[ACP] + NADP(+) = a 3-oxoacyl-[ACP] + NADPH + H(+). It participates in lipid metabolism; fatty acid biosynthesis. In terms of biological role, catalyzes the NADPH-dependent reduction of beta-ketoacyl-ACP substrates to beta-hydroxyacyl-ACP products, the first reductive step in the elongation cycle of fatty acid biosynthesis. This chain is 3-oxoacyl-[acyl-carrier-protein] reductase FabG (fabG), found in Rickettsia typhi (strain ATCC VR-144 / Wilmington).